A 74-amino-acid polypeptide reads, in one-letter code: uncharacterized protein (74 aa).

This is an uncharacterized protein from Avena sativa (Oat).